Reading from the N-terminus, the 669-residue chain is DNA ligase (669 aa).

Residues 32-36 (DAEYD), 81-82 (SL), and glutamate 113 each bind NAD(+). Lysine 115 (N6-AMP-lysine intermediate) is an active-site residue. The NAD(+) site is built by arginine 136, glutamate 173, lysine 290, and lysine 314. Cysteine 408, cysteine 411, cysteine 426, and cysteine 432 together coordinate Zn(2+). The 78-residue stretch at 592-669 (AVDSALAGKI…DEQALIEFLK (78 aa)) folds into the BRCT domain.

Belongs to the NAD-dependent DNA ligase family. LigA subfamily. Mg(2+) is required as a cofactor. It depends on Mn(2+) as a cofactor.

It carries out the reaction NAD(+) + (deoxyribonucleotide)n-3'-hydroxyl + 5'-phospho-(deoxyribonucleotide)m = (deoxyribonucleotide)n+m + AMP + beta-nicotinamide D-nucleotide.. Functionally, DNA ligase that catalyzes the formation of phosphodiester linkages between 5'-phosphoryl and 3'-hydroxyl groups in double-stranded DNA using NAD as a coenzyme and as the energy source for the reaction. It is essential for DNA replication and repair of damaged DNA. The sequence is that of DNA ligase from Vibrio cholerae serotype O1 (strain ATCC 39315 / El Tor Inaba N16961).